The sequence spans 327 residues: 2-keto-3-deoxygluconate permease (327 aa).

Transmembrane regions (helical) follow at residues 10–30 (IPGGMMLVPLFLGALCHTFSP), 42–62 (GMITGTVPILAVWFFCMGASI), 73–93 (KSGTLVVTKIAVAWVVAAIAS), 95–115 (IIPEHGVEVGFFAGLSTLALV), 139–159 (AGAFVLMSLESGPLMTMIILG), 163–183 (IASFEPHVFVGAVLPFLVGFA), 199–219 (VQTLIPFFAFALGNTIDLTVI), 224–244 (LLGILLGVAVIIVTGIPLIIA), 254–274 (TAGIAASSSAGAAVATPVLIA), and 289–309 (SLVATAVIVTSILVPILTSIW).

This sequence belongs to the KdgT transporter family.

Its subcellular location is the cell inner membrane. The enzyme catalyses 2-dehydro-3-deoxy-D-gluconate(in) + H(+)(in) = 2-dehydro-3-deoxy-D-gluconate(out) + H(+)(out). Functionally, catalyzes the proton-dependent uptake of 2-keto-3-deoxygluconate (KDG) into the cell. This chain is 2-keto-3-deoxygluconate permease, found in Escherichia coli O127:H6 (strain E2348/69 / EPEC).